The following is a 641-amino-acid chain: MGSLQTPTNLSNKSCLCVSGRVVKGLRVERQVGLGFSWLLKGRRNRKVQSLCVTSSVSDGSSIAENKNVSEGLLLGAERDGSGSVVGFQLIPHSVAGDATMVESHDIVANDRDDLSEDTEEMEETPIKLTFNIIFVTAEAAPYSKTGGLGDVCGSLPMALAARGHRVMVVSPRYLNGGPSDEKYANAVDLDVRATVHCFGDAQEVAFYHEYRAGVDWVFVDHSSYCRPGTPYGDIYGAFGDNQFRFTLLSHAACEAPLVLPLGGFTYGEKCLFLANDWHAALVPLLLAAKYRPYGVYKDARSIVAIHNIAHQGVEPAVTYNNLGLPPQWYGAVEWIFPTWARAHALDTGETVNVLKGAIAVADRILTVSQGYSWEITTPEGGYGLHELLSSRQSVLNGITNGIDVNDWNPSTDEHIASHYSINDLSGKVQCKTDLQKELGLPIRPDCPLIGFIGRLDYQKGVDIILSAIPELMQNDVQVVMLGSGEKQYEDWMRHTENLFKDKFRAWVGFNVPVSHRITAGCDILLMPSRFEPCGLNQLYAMRYGTIPIVHSTGGLRDTVKDFNPYAQEGIGEGTGWTFSPLTSEKLLDTLKLAIGTYTEHKSSWEGLMRRGMGRDYSWENAAIQYEQVFTWAFIDPPYVR.

Lys145 is a binding site for ADP-alpha-D-glucose.

It belongs to the glycosyltransferase 1 family. Bacterial/plant glycogen synthase subfamily. As to expression, high expression in leaves and very low in tubers.

Its subcellular location is the plastid. The protein resides in the chloroplast. It localises to the amyloplast. The enzyme catalyses [(1-&gt;4)-alpha-D-glucosyl](n) + ADP-alpha-D-glucose = [(1-&gt;4)-alpha-D-glucosyl](n+1) + ADP + H(+). The protein operates within glycan biosynthesis; starch biosynthesis. Functionally, plays a minor role in starch synthesis in storage organs (tubers), but may contribute to the deposition of transient starch in chloroplasts of leaves. In Solanum tuberosum (Potato), this protein is Soluble starch synthase 1, chloroplastic/amyloplastic.